Reading from the N-terminus, the 478-residue chain is Cysteine--tRNA ligase (478 aa).

Cysteine 29 provides a ligand contact to Zn(2+). A 'HIGH' region motif is present at residues 31–41 (VTVYDYCHLGH). Positions 213, 238, and 242 each coordinate Zn(2+). Residues 270 to 274 (KMSKS) carry the 'KMSKS' region motif. Lysine 273 serves as a coordination point for ATP.

It belongs to the class-I aminoacyl-tRNA synthetase family. In terms of assembly, monomer. Zn(2+) is required as a cofactor.

The protein localises to the cytoplasm. The enzyme catalyses tRNA(Cys) + L-cysteine + ATP = L-cysteinyl-tRNA(Cys) + AMP + diphosphate. In Synechococcus sp. (strain ATCC 27144 / PCC 6301 / SAUG 1402/1) (Anacystis nidulans), this protein is Cysteine--tRNA ligase.